We begin with the raw amino-acid sequence, 660 residues long: Bifunctional polymyxin resistance protein ArnA (660 aa).

A formyltransferase ArnAFT region spans residues 1–304 (MKAVIFAYHD…TLGLVAGARL (304 aa)). Catalysis depends on histidine 104, which acts as the Proton donor; for formyltransferase activity. Residues arginine 114 and 136–140 (VKRAD) each bind (6R)-10-formyltetrahydrofolate. Residues 314–660 (RRIRVLILGV…RSVDVAERAS (347 aa)) form a dehydrogenase ArnADH region. Residues aspartate 347 and 368 to 369 (DI) each bind NAD(+). UDP-alpha-D-glucuronate is bound by residues alanine 393, tyrosine 398, and 432 to 433 (TS). Catalysis depends on glutamate 434, which acts as the Proton acceptor; for decarboxylase activity. UDP-alpha-D-glucuronate is bound by residues arginine 460, asparagine 492, 526–535 (KLIDGGQQKR), and tyrosine 613. The active-site Proton donor; for decarboxylase activity is the arginine 619.

The protein in the N-terminal section; belongs to the Fmt family. UDP-L-Ara4N formyltransferase subfamily. It in the C-terminal section; belongs to the NAD(P)-dependent epimerase/dehydratase family. UDP-glucuronic acid decarboxylase subfamily. Homohexamer, formed by a dimer of trimers.

The enzyme catalyses UDP-alpha-D-glucuronate + NAD(+) = UDP-beta-L-threo-pentopyranos-4-ulose + CO2 + NADH. The catalysed reaction is UDP-4-amino-4-deoxy-beta-L-arabinose + (6R)-10-formyltetrahydrofolate = UDP-4-deoxy-4-formamido-beta-L-arabinose + (6S)-5,6,7,8-tetrahydrofolate + H(+). It functions in the pathway nucleotide-sugar biosynthesis; UDP-4-deoxy-4-formamido-beta-L-arabinose biosynthesis; UDP-4-deoxy-4-formamido-beta-L-arabinose from UDP-alpha-D-glucuronate: step 1/3. The protein operates within nucleotide-sugar biosynthesis; UDP-4-deoxy-4-formamido-beta-L-arabinose biosynthesis; UDP-4-deoxy-4-formamido-beta-L-arabinose from UDP-alpha-D-glucuronate: step 3/3. It participates in bacterial outer membrane biogenesis; lipopolysaccharide biosynthesis. Bifunctional enzyme that catalyzes the oxidative decarboxylation of UDP-glucuronic acid (UDP-GlcUA) to UDP-4-keto-arabinose (UDP-Ara4O) and the addition of a formyl group to UDP-4-amino-4-deoxy-L-arabinose (UDP-L-Ara4N) to form UDP-L-4-formamido-arabinose (UDP-L-Ara4FN). The modified arabinose is attached to lipid A and is required for resistance to polymyxin and cationic antimicrobial peptides. This Salmonella choleraesuis (strain SC-B67) protein is Bifunctional polymyxin resistance protein ArnA.